Reading from the N-terminus, the 351-residue chain is Biotin synthase (351 aa).

In terms of domain architecture, Radical SAM core spans 44–262; sequence NRVQVSTLLS…LAVARILMPQ (219 aa). Positions 59, 63, and 66 each coordinate [4Fe-4S] cluster. The [2Fe-2S] cluster site is built by C103, C134, C194, and R266.

This sequence belongs to the radical SAM superfamily. Biotin synthase family. Homodimer. The cofactor is [4Fe-4S] cluster. [2Fe-2S] cluster serves as cofactor.

The catalysed reaction is (4R,5S)-dethiobiotin + (sulfur carrier)-SH + 2 reduced [2Fe-2S]-[ferredoxin] + 2 S-adenosyl-L-methionine = (sulfur carrier)-H + biotin + 2 5'-deoxyadenosine + 2 L-methionine + 2 oxidized [2Fe-2S]-[ferredoxin]. The protein operates within cofactor biosynthesis; biotin biosynthesis; biotin from 7,8-diaminononanoate: step 2/2. Its function is as follows. Catalyzes the conversion of dethiobiotin (DTB) to biotin by the insertion of a sulfur atom into dethiobiotin via a radical-based mechanism. This Pseudomonas fluorescens (strain ATCC BAA-477 / NRRL B-23932 / Pf-5) protein is Biotin synthase.